Consider the following 290-residue polypeptide: Agmatinase (290 aa).

Mn(2+) contacts are provided by His112, Asp135, His137, Asp139, Asp216, and Asp218.

This sequence belongs to the arginase family. Agmatinase subfamily. Requires Mn(2+) as cofactor.

It catalyses the reaction agmatine + H2O = urea + putrescine. It participates in amine and polyamine biosynthesis; putrescine biosynthesis via agmatine pathway; putrescine from agmatine: step 1/1. In terms of biological role, catalyzes the formation of putrescine from agmatine. This is Agmatinase (speB) from Bacillus cereus (strain ATCC 14579 / DSM 31 / CCUG 7414 / JCM 2152 / NBRC 15305 / NCIMB 9373 / NCTC 2599 / NRRL B-3711).